The chain runs to 387 residues: 3-ketoacyl-CoA thiolase (387 aa).

The Acyl-thioester intermediate role is filled by Cys-91. Catalysis depends on proton acceptor residues His-343 and Cys-373.

This sequence belongs to the thiolase-like superfamily. Thiolase family. Heterotetramer of two alpha chains (FadB) and two beta chains (FadA).

Its subcellular location is the cytoplasm. It carries out the reaction an acyl-CoA + acetyl-CoA = a 3-oxoacyl-CoA + CoA. It participates in lipid metabolism; fatty acid beta-oxidation. In terms of biological role, catalyzes the final step of fatty acid oxidation in which acetyl-CoA is released and the CoA ester of a fatty acid two carbons shorter is formed. This is 3-ketoacyl-CoA thiolase from Yersinia pseudotuberculosis serotype O:1b (strain IP 31758).